The sequence spans 266 residues: Glutamate racemase (266 aa).

Residues 9–10 and 41–42 each bind substrate; these read DS and YG. Cys-72 acts as the Proton donor/acceptor in catalysis. 73–74 is a binding site for substrate; it reads NT. Cys-184 (proton donor/acceptor) is an active-site residue. Residue 185–186 coordinates substrate; the sequence is TH.

The protein belongs to the aspartate/glutamate racemases family. Homodimer.

It catalyses the reaction L-glutamate = D-glutamate. It functions in the pathway cell wall biogenesis; peptidoglycan biosynthesis. In terms of biological role, provides the (R)-glutamate required for cell wall biosynthesis. The polypeptide is Glutamate racemase (Staphylococcus aureus (strain MRSA252)).